The following is a 323-amino-acid chain: MYHSSSQKRHWTFASEEQLARLRADANRKFKCKAVANGKVLPNDPVFLEPHEELTLCKYYEKRLLEFCSVFKPAMPRSVVGTACMYFKRFYLNNSVMEYHPRIIMLTCAFLACKVDEFNVSSPQFVGNLRESPLGQERALEQILEYELLLIQQLNFHLIVHNPYRPFEGFLIDIKTRYPMLENPEILRKTADDFLSRIALTDAYLLYTPSQIALTAILSSASRAGITMESYLSESLMLKENRTCLSQLLDIMKSMRNLVKKYEPPRSDEVAVLKQKLERCHSSDLALNAVTKKRKGYEDDDYVSKKPKQEEEEWTDDDLVDSL.

Position 5 is a phosphoserine; by CDK8 (S5). The residue at position 132 (S132) is a Phosphoserine. The interval 295–323 (KGYEDDDYVSKKPKQEEEEWTDDDLVDSL) is disordered. The residue at position 304 (S304) is a Phosphoserine; by CDK8. The span at 310-323 (EEEEWTDDDLVDSL) shows a compositional bias: acidic residues. Residue T315 is modified to Phosphothreonine. Residue S322 is modified to Phosphoserine.

Belongs to the cyclin family. Cyclin C subfamily. Associates primarily with CDK7 and MAT1 to form the CAK complex. CAK can further associate with the core-TFIIH to form the TFIIH basal transcription factor. As to expression, expressed in both the germinal and somatic cells of the testis.

It is found in the nucleus. Functionally, regulates CDK7, the catalytic subunit of the CDK-activating kinase (CAK) enzymatic complex. CAK activates the cyclin-associated kinases CDK1, CDK2, CDK4 and CDK6 by threonine phosphorylation. CAK complexed to the core-TFIIH basal transcription factor activates RNA polymerase II by serine phosphorylation of the repetitive C-terminal domain (CTD) of its large subunit (POLR2A), allowing its escape from the promoter and elongation of the transcripts. Involved in cell cycle control and in RNA transcription by RNA polymerase II. Its expression and activity are constant throughout the cell cycle. The polypeptide is Cyclin-H (Ccnh) (Mus musculus (Mouse)).